The primary structure comprises 270 residues: 4-hydroxy-tetrahydrodipicolinate reductase (270 aa).

NAD(+)-binding positions include 8–13 (GALGRM), Asp-34, 102–104 (GTT), and 128–131 (SQNY). His-160 (proton donor/acceptor) is an active-site residue. His-161 serves as a coordination point for (S)-2,3,4,5-tetrahydrodipicolinate. Lys-164 functions as the Proton donor in the catalytic mechanism. 170 to 171 (GT) lines the (S)-2,3,4,5-tetrahydrodipicolinate pocket.

Belongs to the DapB family.

It localises to the cytoplasm. It catalyses the reaction (S)-2,3,4,5-tetrahydrodipicolinate + NAD(+) + H2O = (2S,4S)-4-hydroxy-2,3,4,5-tetrahydrodipicolinate + NADH + H(+). The catalysed reaction is (S)-2,3,4,5-tetrahydrodipicolinate + NADP(+) + H2O = (2S,4S)-4-hydroxy-2,3,4,5-tetrahydrodipicolinate + NADPH + H(+). Its pathway is amino-acid biosynthesis; L-lysine biosynthesis via DAP pathway; (S)-tetrahydrodipicolinate from L-aspartate: step 4/4. Functionally, catalyzes the conversion of 4-hydroxy-tetrahydrodipicolinate (HTPA) to tetrahydrodipicolinate. The sequence is that of 4-hydroxy-tetrahydrodipicolinate reductase from Methanococcus vannielii (strain ATCC 35089 / DSM 1224 / JCM 13029 / OCM 148 / SB).